A 418-amino-acid chain; its full sequence is AP-3 complex subunit mu-1 (418 aa).

Residues 176 to 417 (NNEAYFDVVE…VTKAGKFQVR (242 aa)) form the MHD domain.

It belongs to the adaptor complexes medium subunit family. As to quaternary structure, adaptor protein complex 3 (AP-3) is a heterotetramer composed of two large adaptins (delta-type subunit AP3D1 and beta-type subunit AP3B1 or AP3B2), a medium adaptin (mu-type subunit AP3M1 or AP3M2) and a small adaptin (sigma-type subunit APS1 or AP3S2). Interacts with AGAP1. AP-3 associates with the BLOC-1 complex.

It localises to the golgi apparatus. The protein localises to the cytoplasmic vesicle membrane. Functionally, part of the AP-3 complex, an adaptor-related complex which is not clathrin-associated. The complex is associated with the Golgi region as well as more peripheral structures. It facilitates the budding of vesicles from the Golgi membrane and may be directly involved in trafficking to lysosomes. In concert with the BLOC-1 complex, AP-3 is required to target cargos into vesicles assembled at cell bodies for delivery into neurites and nerve terminals. The sequence is that of AP-3 complex subunit mu-1 (Ap3m1) from Mus musculus (Mouse).